A 299-amino-acid chain; its full sequence is tRNA dimethylallyltransferase (299 aa).

Residue Gly11 to Thr18 coordinates ATP. Residue Thr13 to Thr18 participates in substrate binding. The interval Asp36–Gln39 is interaction with substrate tRNA.

Belongs to the IPP transferase family. As to quaternary structure, monomer. Mg(2+) is required as a cofactor.

The enzyme catalyses adenosine(37) in tRNA + dimethylallyl diphosphate = N(6)-dimethylallyladenosine(37) in tRNA + diphosphate. In terms of biological role, catalyzes the transfer of a dimethylallyl group onto the adenine at position 37 in tRNAs that read codons beginning with uridine, leading to the formation of N6-(dimethylallyl)adenosine (i(6)A). This is tRNA dimethylallyltransferase from Streptococcus pyogenes serotype M12 (strain MGAS2096).